The chain runs to 1532 residues: Multidrug resistance-associated protein 1 (1532 aa).

Topologically, residues 1-33 are extracellular; that stretch reads MALSSFCSSDGSDPLWDWNVTWHTSNPDFTKCF. N-linked (GlcNAc...) asparagine glycosylation is present at Asn19. The chain crosses the membrane as a helical span at residues 34–54; that stretch reads QNTVLTWVPCFYLWSCFPLYF. Residues 55–74 lie on the Cytoplasmic side of the membrane; the sequence is LYLSRHDRGYIQMTHLNKAK. A helical transmembrane segment spans residues 75-95; sequence TALGFFLWIICWADLFYSFWE. Residues 96–100 lie on the Extracellular side of the membrane; sequence RSQGM. Residues 101-121 form a helical membrane-spanning segment; sequence LLAPVLLVSPTLLGITMLLAT. At 122–133 the chain is on the cytoplasmic side; sequence FLIQFERRKGVQ. Residues 134-154 form a helical membrane-spanning segment; sequence SSGIMLTFWLVALLCALAILR. Residues 155–172 lie on the Extracellular side of the membrane; it reads SKIISALKKDAQVDMFRD. Residues 173 to 193 traverse the membrane as a helical segment; it reads SAFYLYFTLVFIQLVLSCFSD. Topologically, residues 194-317 are cytoplasmic; it reads SSPLFSETVR…KDRDPSLFKV (124 aa). Tyr277 carries the phosphotyrosine modification. Ser290 carries the phosphoserine modification. Residues 318 to 338 traverse the membrane as a helical segment; it reads LYKTFGPYFLMSFLYKALHDL. Residues 326-609 enclose the ABC transmembrane type-1 1 domain; it reads FLMSFLYKAL…LPMVISSIVQ (284 aa). The Extracellular segment spans residues 339–364; it reads MMFAGPEILELIINFVNDREAPDWQG. Residues 365-385 form a helical membrane-spanning segment; sequence YLYTALLFVSACLQTLALHQY. Topologically, residues 386-441 are cytoplasmic; the sequence is FHICFVTGMRIKTAVVGAVYRKALVITNSARKSSTVGEIVNLMSVDAQRFMDLATY. A helical membrane pass occupies residues 442–462; that stretch reads INMIWSAPLQVTLALYFLWLN. The Extracellular segment spans residues 463–465; the sequence is LGP. Residues 466-486 traverse the membrane as a helical segment; it reads SVLAGVAVMILMVPFNAVMAM. The Cytoplasmic segment spans residues 487 to 548; the sequence is KTKTYQVAHM…VLKKSAYLAA (62 aa). Lys504 carries the post-translational modification N6-succinyllysine. The helical transmembrane segment at 549-569 threads the bilayer; it reads VGTFTWVCTPFLVALSTFAVF. Topologically, residues 570-591 are extracellular; the sequence is VTVDEKNILDAKKAFVSLALFN. A helical membrane pass occupies residues 592 to 612; it reads ILRFPLNILPMVISSIVQASV. At 613–967 the chain is on the cytoplasmic side; sequence SLKRLRIFLS…VKLSVYWNYM (355 aa). Residues 645 to 869 form the ABC transporter 1 domain; sequence ITVKNATFTW…DGAFAEFVRT (225 aa). 679–686 lines the ATP pocket; the sequence is GQVGCGKS. Phosphoserine is present on residues Ser879, Ser883, Ser916, and Ser931. The chain crosses the membrane as a helical span at residues 968–988; it reads KAIGLCISFLSIFLFLCNHVS. The ABC transmembrane type-1 2 domain maps to 975–1257; sequence SFLSIFLFLC…LVRMSSEMET (283 aa). The Extracellular segment spans residues 989–1026; sequence ALASNYWLSLWTDDRPAVNGTQENRNFRLSVYGALGIL. The chain crosses the membrane as a helical span at residues 1027-1047; it reads QGVAVFGYSMAVSIGGIFASR. At 1048 to 1090 the chain is on the cytoplasmic side; sequence RLHLDLLQNVLRSPMSFFERTPSGNLVNRFSKELDTVDSMIPQ. A helical transmembrane segment spans residues 1091-1111; it reads VIKMFMGSLFSVIGAVIIILL. A topological domain (extracellular) is located at residue Ala1112. Residues 1113-1133 traverse the membrane as a helical segment; sequence TPIAAVIIPPLGLVYFFVQRF. Topologically, residues 1134 to 1204 are cytoplasmic; it reads YVASSRQLKR…VANRWLAVRL (71 aa). The chain crosses the membrane as a helical span at residues 1205 to 1225; that stretch reads ECVGNCIVLFAALFAVISRHS. Topologically, residues 1226–1227 are extracellular; that stretch reads LS. A helical transmembrane segment spans residues 1228 to 1248; the sequence is AGLVGLSVSYSLQITAYLNWL. Residues 1249 to 1532 are Cytoplasmic-facing; the sequence is VRMSSEMETN…YSMAKDAGLV (284 aa). An ABC transporter 2 domain is found at 1294-1528; sequence VEFRDYCLRY…RGVFYSMAKD (235 aa). 1328–1335 contributes to the ATP binding site; that stretch reads GRTGAGKS.

It belongs to the ABC transporter superfamily. ABCC family. Conjugate transporter (TC 3.A.1.208) subfamily. Glycosylated. As to expression, skeletal muscle, brain, heart, spleen, lung and kidney.

The protein localises to the cell membrane. Its subcellular location is the basolateral cell membrane. The enzyme catalyses ATP + H2O + xenobioticSide 1 = ADP + phosphate + xenobioticSide 2.. It catalyses the reaction an S-substituted glutathione(in) + ATP + H2O = an S-substituted glutathione(out) + ADP + phosphate + H(+). The catalysed reaction is sphing-4-enine 1-phosphate(in) + ATP + H2O = sphing-4-enine 1-phosphate(out) + ADP + phosphate + H(+). It carries out the reaction leukotriene C4(in) + ATP + H2O = leukotriene C4(out) + ADP + phosphate + H(+). The enzyme catalyses 17beta-estradiol 17-O-(beta-D-glucuronate)(in) + ATP + H2O = 17beta-estradiol 17-O-(beta-D-glucuronate)(out) + ADP + phosphate + H(+). It catalyses the reaction daunorubicin(in) + ATP + H2O = daunorubicin(out) + ADP + phosphate + H(+). The catalysed reaction is vincristine(in) + ATP + H2O = vincristine(out) + ADP + phosphate + H(+). It carries out the reaction 2',3'-cGAMP(in) + ATP + H2O = 2',3'-cGAMP(out) + ADP + phosphate + H(+). The enzyme catalyses S-[(2E,6E,10E)-geranylgeranyl]-L-glutathione(in) + ATP + H2O = S-[(2E,6E,10E)-geranylgeranyl]-L-glutathione(out) + ADP + phosphate + H(+). It catalyses the reaction prostaglandin A2-S-(R)-glutathione(in) + ATP + H2O = prostaglandin A2-S-(R)-glutathione(out) + ADP + phosphate + H(+). The catalysed reaction is prostaglandin A2-S-(S)-glutathione(in) + ATP + H2O = prostaglandin A2-S-(S)-glutathione(out) + ADP + phosphate + H(+). Its activity is regulated as follows. MK 571 inhibits sphingosine 1-phosphate and leukotriene C4 export. Its function is as follows. Mediates export of organic anions and drugs from the cytoplasm. Mediates ATP-dependent transport of glutathione and glutathione conjugates, leukotriene C4, estradiol-17-beta-o-glucuronide, methotrexate, antiviral drugs and other xenobiotics. Confers resistance to anticancer drugs by decreasing accumulation of drug in cells, and by mediating ATP- and GSH-dependent drug export. Hydrolyzes ATP with low efficiency. Catalyzes the export of sphingosine 1-phosphate from mast cells independently of their degranulation. Participates in inflammatory response by allowing export of leukotriene C4 from leukotriene C4-synthesizing cells. Exports S-geranylgeranyl-glutathione (GGG) in lymphoid cells and stromal compartments of lymphoid organs. ABCC1 (via extracellular transport) with GGT5 (via GGG catabolism) establish GGG gradients within lymphoid tissues to position P2RY8-positive lymphocytes at germinal centers in lymphoid follicles and restrict their chemotactic transmigration from blood vessels to the bone marrow parenchyma. Mediates basolateral export of GSH-conjugated R- and S-prostaglandin A2 diastereomers in polarized epithelial cells. This is Multidrug resistance-associated protein 1 from Rattus norvegicus (Rat).